Reading from the N-terminus, the 182-residue chain is Large ribosomal subunit protein bL25 (182 aa).

It belongs to the bacterial ribosomal protein bL25 family. CTC subfamily. In terms of assembly, part of the 50S ribosomal subunit; part of the 5S rRNA/L5/L18/L25 subcomplex. Contacts the 5S rRNA. Binds to the 5S rRNA independently of L5 and L18.

Functionally, this is one of the proteins that binds to the 5S RNA in the ribosome where it forms part of the central protuberance. In Borreliella burgdorferi (strain ATCC 35210 / DSM 4680 / CIP 102532 / B31) (Borrelia burgdorferi), this protein is Large ribosomal subunit protein bL25.